The primary structure comprises 333 residues: Tryptophan--tRNA ligase (333 aa).

Residues 11-13 and 19-20 each bind ATP; these read QPS and GN. The 'HIGH' region motif lies at 12–20; that stretch reads PSGELTIGN. Position 135 (Asp135) interacts with L-tryptophan. Residues 147–149, Val186, and 195–199 contribute to the ATP site; these read GED and KMSKS. Residues 195–199 carry the 'KMSKS' region motif; it reads KMSKS.

It belongs to the class-I aminoacyl-tRNA synthetase family. As to quaternary structure, homodimer.

The protein localises to the cytoplasm. The enzyme catalyses tRNA(Trp) + L-tryptophan + ATP = L-tryptophyl-tRNA(Trp) + AMP + diphosphate + H(+). Its function is as follows. Catalyzes the attachment of tryptophan to tRNA(Trp). The protein is Tryptophan--tRNA ligase of Pasteurella multocida (strain Pm70).